Reading from the N-terminus, the 1235-residue chain is Bromodomain-containing protein 8 (1235 aa).

N6-acetyllysine is present on K85. Residues 97-171 adopt a coiled-coil conformation; that stretch reads VRKLTAERVE…ATDAAYQARQ (75 aa). Position 124 is a phosphothreonine (R124). 2 positions are modified to phosphoserine: L128 and D144. The segment at 186-205 is disordered; sequence RSPIDSASPGGDYPLGDLTP. A264 carries the post-translational modification Phosphothreonine. Phosphoserine occurs at positions 268, 284, 383, and 387. K469 is covalently cross-linked (Glycyl lysine isopeptide (Lys-Gly) (interchain with G-Cter in SUMO2)). K481 carries the N6-acetyllysine; alternate modification. K481 is covalently cross-linked (Glycyl lysine isopeptide (Lys-Gly) (interchain with G-Cter in SUMO1); alternate). A Glycyl lysine isopeptide (Lys-Gly) (interchain with G-Cter in SUMO2); alternate cross-link involves residue K481. Residues K509 and K575 each participate in a glycyl lysine isopeptide (Lys-Gly) (interchain with G-Cter in SUMO2) cross-link. Residues 551 to 597 form a disordered region; sequence TAAGEIVEADVAIGKGDETPLTNVKTEASPESMLSPSHGSNPIEDPL. S579 is subject to Phosphoserine. K612 is covalently cross-linked (Glycyl lysine isopeptide (Lys-Gly) (interchain with G-Cter in SUMO2)). A phosphoserine mark is found at S621, S637, and S641. A disordered region spans residues 621 to 672; sequence SQIKDAPGEDEEEDGVSEAASLEEPKEEDQGEGYLSEMDNEPPVSESDDGFS. The region spanning 706-811 is the Bromo 1 domain; sequence IQAQKIWKKA…RDVLEQIQQF (106 aa). 3 disordered regions span residues 827-848, 903-940, and 966-999; these read AKSLRGRDSTRKQDASEKDSVP, ETEDPEAEELEESSPEREPSELLVGDGGSEESQEAARK, and ESSEGCCPPSGTRQEGREIKASEGERELCRETEE. Over residues 831 to 846 the composition is skewed to basic and acidic residues; it reads RGRDSTRKQDASEKDS. Residues 905-915 are compositionally biased toward acidic residues; it reads EDPEAEELEES. Phosphoserine is present on L924. Residues 979–999 are compositionally biased toward basic and acidic residues; that stretch reads QEGREIKASEGERELCRETEE. Residues 1099 to 1207 form the Bromo 2 domain; sequence DDPVQDHLLF…QEVLEQIQVL (109 aa).

As to quaternary structure, component of the NuA4 histone acetyltransferase complex which contains the catalytic subunit KAT5/TIP60 and the subunits EP400, TRRAP/PAF400, BRD8/SMAP, EPC1, DMAP1/DNMAP1, RUVBL1/TIP49, RUVBL2, ING3, actin, ACTL6A/BAF53A, MORF4L1/MRG15, MORF4L2/MRGX, MRGBP, YEATS4/GAS41, VPS72/YL1 and MEAF6. The NuA4 complex interacts with MYC and the adenovirus E1A protein. Component of a NuA4-related complex which contains EP400, TRRAP/PAF400, SRCAP, BRD8/SMAP, EPC1, DMAP1/DNMAP1, RUVBL1/TIP49, RUVBL2, actin, ACTL6A/BAF53A, VPS72 and YEATS4/GAS41. BRD8 isoform 2 interacts with RXRA/NR2B1 and THRB/ERBA2. Component of a SWR1-like complex. In terms of tissue distribution, expressed in adipose tissue, brain, heart, kidney, liver, lung, pancreas, placenta and skeletal muscle.

The protein localises to the nucleus. Functionally, may act as a coactivator during transcriptional activation by hormone-activated nuclear receptors (NR). Isoform 2 stimulates transcriptional activation by AR/DHTR, ESR1/NR3A1, RXRA/NR2B1 and THRB/ERBA2. At least isoform 1 and isoform 2 are components of the NuA4 histone acetyltransferase (HAT) complex which is involved in transcriptional activation of select genes principally by acetylation of nucleosomal histones H4 and H2A. This modification may both alter nucleosome - DNA interactions and promote interaction of the modified histones with other proteins which positively regulate transcription. This complex may be required for the activation of transcriptional programs associated with oncogene and proto-oncogene mediated growth induction, tumor suppressor mediated growth arrest and replicative senescence, apoptosis, and DNA repair. NuA4 may also play a direct role in DNA repair when recruited to sites of DNA damage. Component of a SWR1-like complex that specifically mediates the removal of histone H2A.Z/H2AZ1 from the nucleosome. The chain is Bromodomain-containing protein 8 (BRD8) from Homo sapiens (Human).